The primary structure comprises 791 residues: Leucine-rich repeat-containing protein SOG2 (791 aa).

The segment at 1–28 is disordered; that stretch reads MVATSSKRTLDPKEEHLPADKTSTNSSN. Basic and acidic residues predominate over residues 8-19; it reads RTLDPKEEHLPA. 6 LRR repeats span residues 43–64, 67–88, 90–111, 113–134, 138–159, and 163–183; these read SGTT…DVGY, NVER…FKRL, RLQY…LTQC, QLEI…ISSF, NIRV…KSIT, and KLSI…DQVQ. Threonine 214 bears the Phosphothreonine mark. 2 disordered regions span residues 454-506 and 534-569; these read ASKA…TPSA and HTHG…PRQQ. Residues 469–486 show a composition bias toward low complexity; that stretch reads SSSSITSGGGPAASTTST. Polar residues predominate over residues 544–569; that stretch reads NAISNGSSQTNMNEVKTTSDTIPRQQ.

It localises to the cytoplasm. Required for proper cell morphogenesis and cell separation after mitosis. Functions in the RAM (regulation of ACE2 activity and cellular morphogenesis) signaling network and is required for proper ACE2 localization and CBK1 kinase activity. This is Leucine-rich repeat-containing protein SOG2 from Saccharomyces cerevisiae (strain ATCC 204508 / S288c) (Baker's yeast).